Reading from the N-terminus, the 383-residue chain is Probable lipid transporter atnI (383 aa).

A run of 2 helical transmembrane segments spans residues 46–66 and 71–91; these read VLFSVLFGLTTIIHIVQAIMF and AWVVIMSSLWELIAFIMRSLF. The N-linked (GlcNAc...) asparagine glycan is linked to N94. Transmembrane regions (helical) follow at residues 104–124, 144–164, 182–202, 231–251, and 269–289; these read FTIFFLLAPIWVNAFLYMTLG, FGHIFVWLEILAFIIQLVGAA, IYMGGIGVQELFILIFTGLFI, WLFYAIYASLFLITVRIIFRL, and WFEYVWDAAPIFICLAILNVA. Residues 305–383 form a disordered region; that stretch reads VSRKEKKQRK…YDNRGNEVRP (79 aa). Residues 307–316 show a composition bias toward basic residues; the sequence is RKEKKQRKRE. Basic and acidic residues predominate over residues 317–329; that stretch reads KKEAKIAEKEAKK.

Belongs to the lipid-translocating exporter (LTE) (TC 9.A.26.1) family.

The protein resides in the membrane. The protein operates within secondary metabolite biosynthesis. Probable lipid transporter; part of the gene cluster that mediates the biosynthesis of aspercryptins, linear lipopeptides built from six amino acids including 2 highly unusual and nonproteogenic amino acids, 2-amino-octanoic acid (2aoa) and 2-amino-dodecanol (2adol). The core structure of aspercryptins is as follows: Ser/Ala-Thr-Ile/Val-2aoa-Asn-2adol. The first step of aspercryptin biosynthesis is the generation of the fatty acid precursors, octanoic and dodecanoic acids, by the FAS subunits atnF and atnM. The fatty acid precursors are likely transformed into the corresponding alpha-amino fatty acids in three steps. First, they are hydroxylated by the cytochrome P450 monooxygenase atnE, then oxidized to the corresponding alpha-keto acids by the NAD(P)-dependent oxidoreductase atnD, and finally converted to the alpha-amino fatty acids by the PLP-dependent aminotransferases atnH or atnJ. the alpha-amino fatty acids, 2-amino-octanoic and 2-amino-dodecanoic acids, are recognized, activated, and covalently tethered to the NRPS atnA by its fourth and sixth adenylation domains. The second module of atnA is the Thr module and contains an epimerase (E) domain responsible for the epimerization of Thr to D-allo-Thr. Additionally, despite atnA having only one epimerase domain, the first amino acid of aspercryptin A1 is D-Ser, suggesting that serine is either loaded directly as D-Ser on the first module or that the epimerase domain in the threonine module epimerizes both L-Ser and L-Thr. After condensation of the hexapeptide of aspercryptin, the C-terminal reductase (TE) domain might be involved in the reductive release and production of the aldehyde hexapeptide. Further reduction would generate aspercryptins. The variety of aspercryptins produced reflects the flexibility of the atnA NRPS, allowing incorporation of alanine instead of serine, valine for isoleucine, and a C10 fatty amino alcohol instead of the C12 version. AtnB seems to be involved in the selectivity for Ile versus Val by the third module. Moreover, type B, C and D aspercryptins have an additional N-terminal cichorine, acetyl and propionyl group respectively. This chain is Probable lipid transporter atnI, found in Emericella nidulans (strain FGSC A4 / ATCC 38163 / CBS 112.46 / NRRL 194 / M139) (Aspergillus nidulans).